The following is a 213-amino-acid chain: 3-isopropylmalate dehydratase small subunit (213 aa).

Belongs to the LeuD family. LeuD type 1 subfamily. Heterodimer of LeuC and LeuD.

It carries out the reaction (2R,3S)-3-isopropylmalate = (2S)-2-isopropylmalate. It functions in the pathway amino-acid biosynthesis; L-leucine biosynthesis; L-leucine from 3-methyl-2-oxobutanoate: step 2/4. Its function is as follows. Catalyzes the isomerization between 2-isopropylmalate and 3-isopropylmalate, via the formation of 2-isopropylmaleate. The sequence is that of 3-isopropylmalate dehydratase small subunit from Neisseria gonorrhoeae (strain ATCC 700825 / FA 1090).